Reading from the N-terminus, the 234-residue chain is RNA chaperone ProQ (234 aa).

Over residues 104–130 (LEEAKARVQAQRDARKREAAENGEKRE) the composition is skewed to basic and acidic residues. A disordered region spans residues 104-186 (LEEAKARVQA…QRSTPVTSLE (83 aa)). Residues 131–142 (PRRPRPAGKKPT) show a composition bias toward basic residues. Basic and acidic residues-rich tracts occupy residues 143–156 (ARRDGEQGSKEVRK) and 163–176 (TSERKPRAKSETTE). A compositionally biased stretch (polar residues) spans 177–186 (QRSTPVTSLE).

Belongs to the ProQ family.

The protein localises to the cytoplasm. Functionally, RNA chaperone with significant RNA binding, RNA strand exchange and RNA duplexing activities. May regulate ProP activity through an RNA-based, post-transcriptional mechanism. This Edwardsiella ictaluri (strain 93-146) protein is RNA chaperone ProQ.